A 274-amino-acid polypeptide reads, in one-letter code: MQMKRTAFFISDGTGITAETLGQSLLAQFENISFVKLTRPYIDTEEKARAMVQQINNAAESDGARPIIFDTIVNRDIRAVLAQSNGFMIDIFATFLSPLEQELSADSSYSVGKSHSIGHNSNYMDRIEAVNFALDNDDGARTHYYDKADLILVGVSRCGKTPTCLYMALQYGIRAANYPLTEEDMERLQLPNALKQYKHKLFGLTIDPDRLTAIRNERKPNSRYASFAQCEFEVREVESLFRRENIAYINSTHFSVEEISAKILVEKGVERRFK.

An ADP-binding site is contributed by 154–161; the sequence is GVSRCGKT.

It belongs to the pyruvate, phosphate/water dikinase regulatory protein family. PSRP subfamily.

The catalysed reaction is [pyruvate, water dikinase] + ADP = [pyruvate, water dikinase]-phosphate + AMP + H(+). It carries out the reaction [pyruvate, water dikinase]-phosphate + phosphate + H(+) = [pyruvate, water dikinase] + diphosphate. Its function is as follows. Bifunctional serine/threonine kinase and phosphorylase involved in the regulation of the phosphoenolpyruvate synthase (PEPS) by catalyzing its phosphorylation/dephosphorylation. The sequence is that of Putative phosphoenolpyruvate synthase regulatory protein from Pseudomonas aeruginosa (strain LESB58).